The primary structure comprises 282 residues: Structure-specific endonuclease subunit slx1 (282 aa).

The GIY-YIG domain maps to 7–97; that stretch reads GFYGVYLLFC…RLTHVPRKTK (91 aa). The segment at 191-243 adopts an SLX1-type zinc-finger fold; it reads CRVCYERVQDKDDSLHCFHPGCTLTAHIMCLAKLFLLNEPQNLIPVEGLCPSC.

It belongs to the SLX1 family. Forms a heterodimer with slx4. A divalent metal cation serves as cofactor.

The protein localises to the nucleus. Functionally, catalytic subunit of the slx1-slx4 structure-specific endonuclease that resolves DNA secondary structures generated during DNA repair and recombination. Has endonuclease activity towards branched DNA substrates, introducing single-strand cuts in duplex DNA close to junctions with ss-DNA. This chain is Structure-specific endonuclease subunit slx1 (slx1a), found in Xenopus laevis (African clawed frog).